The primary structure comprises 89 residues: Protein XhlA (89 aa).

The helical transmembrane segment at 63–83 (ITGAIITAVSTGIIGGAIAIM) threads the bilayer.

This sequence to B.licheniformis xpaF1 and xpaL1.

It is found in the cell membrane. Its function is as follows. Associated with cell lysis upon induction of PbsX. The protein is Protein XhlA (xhlA) of Bacillus subtilis (strain 168).